Here is a 277-residue protein sequence, read N- to C-terminus: Carbonyl reductase [NADPH] 1 (277 aa).

Ser-2 is modified (N-acetylserine). Ser-2 bears the Phosphoserine mark. NADP(+)-binding positions include 10–34, 63–64, and Asn-90; these read VTGA…GDVV and DI. Glutathione-binding positions include 95–97 and Gln-106; that span reads FKV. Ser-140 is a substrate binding site. Position 193-194 (193-194) interacts with glutathione; it reads AY. Tyr-194 serves as the catalytic Proton acceptor. Residues 194–198 and 231–233 each bind NADP(+); these read YGVTK and VRT. An N6-1-carboxyethyl lysine modification is found at Lys-239. A disordered region spans residues 258 to 277; the sequence is PPGAEGPHGQFVQDKKVEPW.

This sequence belongs to the short-chain dehydrogenases/reductases (SDR) family. In terms of assembly, monomer.

It is found in the cytoplasm. The catalysed reaction is a secondary alcohol + NADP(+) = a ketone + NADPH + H(+). It catalyses the reaction prostaglandin F2alpha + NADP(+) = prostaglandin E2 + NADPH + H(+). It carries out the reaction prostaglandin E1 + NADP(+) = 15-oxoprostaglandin E1 + NADPH + H(+). The enzyme catalyses menadione + NADPH + H(+) = menadiol + NADP(+). The catalysed reaction is prostaglandin D2 + NADP(+) = 15-oxoprostaglandin D2 + NADPH + H(+). It catalyses the reaction prostaglandin E2 + NADP(+) = 15-oxoprostaglandin E2 + NADPH + H(+). It carries out the reaction prostaglandin F2alpha + NADP(+) = 15-oxoprostaglandin F2alpha + NADPH + H(+). The enzyme catalyses daunorubicin + NADPH + H(+) = 13-dihydrodaunorubicin + NADP(+). The catalysed reaction is S-nitrosoglutathione + NADPH + H(+) = S-(hydroxysulfenamide)glutathione + NADP(+). It catalyses the reaction a primary alcohol + NADP(+) = an aldehyde + NADPH + H(+). It carries out the reaction cortisol + NADPH + H(+) = 20beta-dihydrocortisol + NADP(+). The enzyme catalyses corticosterone + NADPH + H(+) = 20beta-dihydrocorticosterone + NADP(+). Functionally, NADPH-dependent reductase with broad substrate specificity. Catalyzes the reduction of a wide variety of carbonyl compounds including quinones, prostaglandins, menadione, plus various xenobiotics. Catalyzes the reduction of the antitumor anthracyclines doxorubicin and daunorubicin to the cardiotoxic compounds doxorubicinol and daunorubicinol. Can convert prostaglandin E to prostaglandin F2-alpha. Can bind glutathione, which explains its higher affinity for glutathione-conjugated substrates. Catalyzes the reduction of S-nitrosoglutathione. In addition, participates in the glucocorticoid metabolism by catalyzing the NADPH-dependent cortisol/corticosterone into 20beta-dihydrocortisol (20b-DHF) or 20beta-corticosterone (20b-DHB), which are weak agonists of NR3C1 and NR3C2 in adipose tissue. In Rattus norvegicus (Rat), this protein is Carbonyl reductase [NADPH] 1.